Consider the following 158-residue polypeptide: MDNKLTHFDNKGNAVMVDVSNKNETERIAIATGTVKASSETIELIKSDQIGKGDVLGVARVAGIMAMKNTSNLIPMCHPVMITGSSIDFEIDSEKNEIRITATSKVVHKTGVEMEALTGVSIAALTIYDMCKAVDKRMVIGDIHLVKKLGGKSGEFNF.

Substrate is bound by residues 76–78 (MCH) and 114–115 (ME). Residue D129 is part of the active site.

This sequence belongs to the MoaC family. As to quaternary structure, homohexamer; trimer of dimers.

The catalysed reaction is (8S)-3',8-cyclo-7,8-dihydroguanosine 5'-triphosphate = cyclic pyranopterin phosphate + diphosphate. Its pathway is cofactor biosynthesis; molybdopterin biosynthesis. In terms of biological role, catalyzes the conversion of (8S)-3',8-cyclo-7,8-dihydroguanosine 5'-triphosphate to cyclic pyranopterin monophosphate (cPMP). The sequence is that of Cyclic pyranopterin monophosphate synthase from Clostridium perfringens (strain SM101 / Type A).